The sequence spans 464 residues: Zinc transporter 6 (464 aa).

Residues 1–33 are Cytoplasmic-facing; the sequence is MGTIYLFRKTQRSLLGKLTQEFRLVTADRRSWK. Residues 34-54 form a helical membrane-spanning segment; sequence ILLFGAINVVCTGFLLTWCSS. Residues 55 to 64 are Extracellular-facing; sequence TNSMALTAYT. Residues 65–85 form a helical membrane-spanning segment; the sequence is YLTIFDLFSLITCLISYWVMM. At 86–98 the chain is on the cytoplasmic side; sequence KKPSPTYSFGFER. The helical transmembrane segment at 99 to 119 threads the bilayer; it reads FEVLSVFASTVLAQLGALFIL. Residues 120 to 134 are Extracellular-facing; it reads KESAERFVEQPEIHT. The helical transmembrane segment at 135–155 threads the bilayer; the sequence is GRLLVGTFVALCFNLFSMLSI. The Cytoplasmic portion of the chain corresponds to 156-200; that stretch reads RNKPFAYVSEAASTSWLQEHVADLSRSLCGIIPGLSSIFLPRMNP. Residues 201 to 221 traverse the membrane as a helical segment; sequence FVLIDIAGALALCITYMLIEI. The Extracellular segment spans residues 222-228; sequence NNYFAVD. The chain crosses the membrane as a helical span at residues 229-249; it reads TASAIAIAVMTFGTMYPMSVY. The Cytoplasmic portion of the chain corresponds to 250–464; it reads SGKVLLQTTP…TPGQFTQFKQ (215 aa).

Belongs to the cation diffusion facilitator (CDF) transporter (TC 2.A.4) family. SLC30A subfamily. As to quaternary structure, heterodimer with SLC30A5; form a functional zinc ion transmembrane transporter.

It is found in the golgi apparatus. It localises to the trans-Golgi network membrane. Has probably no intrinsic transporter activity but together with SLC30A5 forms a functional zinc ion:proton antiporter heterodimer, mediating zinc entry into the lumen of organelles along the secretory pathway. As part of that zinc ion:proton antiporter, contributes to zinc ion homeostasis within the early secretory pathway and regulates the activation and folding of enzymes like alkaline phosphatases and enzymes involved in phosphatidylinositol glycan anchor biosynthesis. In Xenopus tropicalis (Western clawed frog), this protein is Zinc transporter 6 (slc30a6).